Reading from the N-terminus, the 351-residue chain is GDSL esterase/lipase At3g14820 (351 aa).

Positions 1–22 are cleaved as a signal peptide; the sequence is MDLHLIGFLLWFFVVQVTTSSA. N-linked (GlcNAc...) asparagine glycosylation occurs at asparagine 25. Serine 39 (nucleophile) is an active-site residue. Active-site residues include aspartate 325 and histidine 328.

Belongs to the 'GDSL' lipolytic enzyme family.

The protein resides in the secreted. The protein is GDSL esterase/lipase At3g14820 of Arabidopsis thaliana (Mouse-ear cress).